The following is an 813-amino-acid chain: MNEYNFSDIEKSTQEYWRKNDTFKTIEDNTKEKFYCLSMLPYPSGTLHMGHVRNYTIGDVIARYQKMQGKNVLHPMGWDAFGLPAENAAIKHKKSPYEWTKSNIAYMRSQFDSLGFSFDWSREIATCDEDYYKWEQWFFIQLYKKGLAYRKNSVVNWDPVDQTVLANEQVVDGRGWRSGALVEKKEIPQWFLKITDYADELLQDINKLDNWPEAVKTMQINWIGKSKGLTVKFKVKDSNQEIEVFTTRPDTLMGVNYLGIAPEHPLALKEAKSNSQLAAFIEECKKTSTMEADLATQEKKGFKTSIKVIHPISAETIDVWVANFVLMGYGSGAVMSVPAHDQRDWEFAQKYNIPLKQVIESNDNKLKIDLEKQAFTEKGILINSGEFDGLNFKNAYQAIKKYLTKQNKGYETTNFRIHDWGISRQRYWGCPIPMIHCDDCGAVPEKEENLPVRLPTDVALTEAGSPLKDIPEFINVACPECGKPAKRETDTFDTFFESSWYYARYTCPTSNQMLDQEANYWLPVDKYIGGIEHAIMHLLYARFFHKLMRDQGLVKSDEPFKNLLTQGMVLKDGAKMSKSKGNIVDPQELIDKYGADTVRLFSMFAASPEQSLEWSETGVEGANKFLRKVFNYAELNKVIFAKNITLESQKLTKEDKKARFEIHSNLKQAIFDFDKSQFNTVVSACMKILNTLNNYDNLSESVKVEGFSILLRILAPFTPHLCHYLWQQLNLGEDILHTSFPTVDNNALEKDEFLLVVQINGKLKAKLELDASLSSNQVEEVVLADEHVKSFIDNKQVVKVIYVPQKLINIVIK.

The 'HIGH' region motif lies at 41-51 (PYPSGTLHMGH). The short motif at 575 to 579 (KMSKS) is the 'KMSKS' region element. Lys578 contributes to the ATP binding site.

Belongs to the class-I aminoacyl-tRNA synthetase family.

The protein localises to the cytoplasm. The enzyme catalyses tRNA(Leu) + L-leucine + ATP = L-leucyl-tRNA(Leu) + AMP + diphosphate. This is Leucine--tRNA ligase from Francisella tularensis subsp. holarctica (strain FTNF002-00 / FTA).